The primary structure comprises 393 residues: Probable hydrolase sll0100 (393 aa).

This sequence belongs to the peptidase M20 family.

This Synechocystis sp. (strain ATCC 27184 / PCC 6803 / Kazusa) protein is Probable hydrolase sll0100.